Here is a 496-residue protein sequence, read N- to C-terminus: Beta-amylase (496 aa).

Position 2 is an N-acetylalanine (A2). Substrate is bound by residues D54, H94, and D102. Residue E187 is the Proton donor of the active site. Substrate contacts are provided by K296, H301, and T343. E381 serves as the catalytic Proton acceptor. Substrate-binding positions include 382–383 (NA) and R421.

It belongs to the glycosyl hydrolase 14 family. As to quaternary structure, monomer.

The catalysed reaction is Hydrolysis of (1-&gt;4)-alpha-D-glucosidic linkages in polysaccharides so as to remove successive maltose units from the non-reducing ends of the chains.. The protein is Beta-amylase (BMY1) of Glycine max (Soybean).